The following is a 146-amino-acid chain: Probable cyclic pyranopterin monophosphate synthase (146 aa).

Residues 66-68 (LTH) and 102-103 (ME) contribute to the substrate site. Residue Asp117 is part of the active site.

This sequence belongs to the MoaC family. In terms of assembly, homohexamer; trimer of dimers.

The enzyme catalyses (8S)-3',8-cyclo-7,8-dihydroguanosine 5'-triphosphate = cyclic pyranopterin phosphate + diphosphate. It functions in the pathway cofactor biosynthesis; molybdopterin biosynthesis. In terms of biological role, catalyzes the conversion of (8S)-3',8-cyclo-7,8-dihydroguanosine 5'-triphosphate to cyclic pyranopterin monophosphate (cPMP). In Aeropyrum pernix (strain ATCC 700893 / DSM 11879 / JCM 9820 / NBRC 100138 / K1), this protein is Probable cyclic pyranopterin monophosphate synthase.